The sequence spans 279 residues: Ribosomal RNA small subunit methyltransferase A (279 aa).

Asn-25, Leu-27, Gly-52, Glu-73, Asp-98, and Asn-120 together coordinate S-adenosyl-L-methionine.

Belongs to the class I-like SAM-binding methyltransferase superfamily. rRNA adenine N(6)-methyltransferase family. RsmA subfamily.

The protein localises to the cytoplasm. It carries out the reaction adenosine(1518)/adenosine(1519) in 16S rRNA + 4 S-adenosyl-L-methionine = N(6)-dimethyladenosine(1518)/N(6)-dimethyladenosine(1519) in 16S rRNA + 4 S-adenosyl-L-homocysteine + 4 H(+). Functionally, specifically dimethylates two adjacent adenosines (A1518 and A1519) in the loop of a conserved hairpin near the 3'-end of 16S rRNA in the 30S particle. May play a critical role in biogenesis of 30S subunits. The polypeptide is Ribosomal RNA small subunit methyltransferase A (Magnetococcus marinus (strain ATCC BAA-1437 / JCM 17883 / MC-1)).